The following is a 147-amino-acid chain: Hemoglobin subunit beta (147 aa).

Valine 2 bears the N-acetylvaline mark. One can recognise a Globin domain in the interval 3 to 147 (HLSAEEKEAV…VANALAHKYH (145 aa)). The residue at position 45 (serine 45) is a Phosphoserine. Lysine 60 bears the N6-acetyllysine mark. Residue histidine 64 coordinates heme b. Lysine 83 carries the post-translational modification N6-acetyllysine. Position 93 (histidine 93) interacts with heme b. The residue at position 94 (cysteine 94) is an S-nitrosocysteine. Lysine 145 is modified (N6-acetyllysine).

This sequence belongs to the globin family. In terms of assembly, heterotetramer of two alpha chains and two beta chains. Red blood cells.

Its function is as follows. Involved in oxygen transport from the lung to the various peripheral tissues. The chain is Hemoglobin subunit beta (HBB) from Sus scrofa (Pig).